We begin with the raw amino-acid sequence, 393 residues long: L-rhamnonate dehydratase (393 aa).

2 residues coordinate substrate: His-22 and Arg-48. The Mg(2+) site is built by Asp-214, Glu-241, and Glu-269. The Proton acceptor role is filled by His-319. Glu-339 lines the substrate pocket.

This sequence belongs to the mandelate racemase/muconate lactonizing enzyme family. RhamD subfamily. Homooctamer; tetramer of dimers. Mg(2+) is required as a cofactor.

It carries out the reaction L-rhamnonate = 2-dehydro-3-deoxy-L-rhamnonate + H2O. Its function is as follows. Catalyzes the dehydration of L-rhamnonate to 2-keto-3-deoxy-L-rhamnonate (KDR). The polypeptide is L-rhamnonate dehydratase (Azorhizobium caulinodans (strain ATCC 43989 / DSM 5975 / JCM 20966 / LMG 6465 / NBRC 14845 / NCIMB 13405 / ORS 571)).